The primary structure comprises 290 residues: Signal recognition particle receptor subunit beta (290 aa).

The chain crosses the membrane as a helical span at residues 44-64 (VLLLALFTLIFIIIISKLFGS). GTP contacts are provided by residues 92-100 (GLSNAGKTA), 114-117 (THTS), Gly-140, and Ala-268.

The protein belongs to the SRP receptor beta subunit family. In terms of assembly, heterodimer of an alpha and a beta chain.

Its subcellular location is the endoplasmic reticulum membrane. In terms of biological role, component of the signal recognition particle (SRP) complex receptor (SR). Ensures, in conjunction with the SRP complex, the correct targeting of the nascent secretory proteins to the endoplasmic reticulum membrane system. May mediate the membrane association of SR. This Dictyostelium discoideum (Social amoeba) protein is Signal recognition particle receptor subunit beta (srprb).